A 510-amino-acid polypeptide reads, in one-letter code: NAD(P)H-quinone oxidoreductase subunit 2 A, chloroplastic (510 aa).

The next 13 membrane-spanning stretches (helical) occupy residues 24 to 44, 57 to 77, 99 to 119, 124 to 144, 149 to 169, 183 to 203, 227 to 247, 295 to 315, 323 to 343, 354 to 374, 395 to 415, 418 to 438, and 482 to 502; these read LLLF…GLIL, MPWL…ALLF, IFQF…VEYI, MAIT…MFLC, LITI…LSGY, YLLM…WLYG, PGIS…LSPA, WHLL…LIAI, MLAY…IVGD, YMLF…LFGL, ALSL…AGFF, LHLF…IGLL, and LSMI…SPII.

Belongs to the complex I subunit 2 family. In terms of assembly, NDH is composed of at least 16 different subunits, 5 of which are encoded in the nucleus.

Its subcellular location is the plastid. It is found in the chloroplast thylakoid membrane. It catalyses the reaction a plastoquinone + NADH + (n+1) H(+)(in) = a plastoquinol + NAD(+) + n H(+)(out). The catalysed reaction is a plastoquinone + NADPH + (n+1) H(+)(in) = a plastoquinol + NADP(+) + n H(+)(out). NDH shuttles electrons from NAD(P)H:plastoquinone, via FMN and iron-sulfur (Fe-S) centers, to quinones in the photosynthetic chain and possibly in a chloroplast respiratory chain. The immediate electron acceptor for the enzyme in this species is believed to be plastoquinone. Couples the redox reaction to proton translocation, and thus conserves the redox energy in a proton gradient. The polypeptide is NAD(P)H-quinone oxidoreductase subunit 2 A, chloroplastic (Populus trichocarpa (Western balsam poplar)).